Here is a 71-residue protein sequence, read N- to C-terminus: Disintegrin viridin (71 aa).

The Disintegrin domain maps to Ala-1–His-71. Disulfide bonds link Cys-5/Cys-20, Cys-7/Cys-15, Cys-14/Cys-37, Cys-28/Cys-34, Cys-33/Cys-58, and Cys-46/Cys-65. The Cell attachment site signature appears at Arg-50–Asp-52. Positions Arg-50 to His-71 are disordered.

Belongs to the venom metalloproteinase (M12B) family. P-II subfamily. P-IIa sub-subfamily. Monomer (disintegrin). As to expression, expressed by the venom gland.

The protein resides in the secreted. Inhibits fibrinogen interaction with platelets. Acts by binding to alpha-IIb/beta-3 (ITGA2B/ITGB3) on the platelet surface and inhibits aggregation induced by ADP, thrombin, platelet-activating factor and collagen. The polypeptide is Disintegrin viridin (Crotalus viridis viridis (Prairie rattlesnake)).